The following is a 452-amino-acid chain: Transcription factor SMP1 (452 aa).

One can recognise an MADS-box domain in the interval 3–57 (RRKIEIEPIKDDRNRTVTFIKRKAGLFKKAHELSVLCQVDIAVIILGSNNTFYEY). Residues 58-87 (SSVDMSNLLNVHQNNTDLPHNIIEPSDYGD) constitute a DNA-binding region (mef2-type). Positions 97–142 (NERKRRRRRATVLQPASHSGSCTVSSQDSSSVQNNGNLSAPLASND) are disordered. Residues 115–127 (SGSCTVSSQDSSS) show a composition bias toward low complexity.

It belongs to the MEF2 family. As to quaternary structure, can heterodimerize with RLM1. Interacts with HOG1. Post-translationally, phosphorylated by HOG1.

The protein localises to the nucleus. In terms of biological role, transcription factor that controls part of the HOG1-mediated osmostress responses. Binds to the DNA sequence 5'-ACTACTA[TA](4)TAG-3'. Does not appear to function in the MPK1 pathway. The polypeptide is Transcription factor SMP1 (SMP1) (Saccharomyces cerevisiae (strain ATCC 204508 / S288c) (Baker's yeast)).